A 541-amino-acid polypeptide reads, in one-letter code: Glutamyl-tRNA(Gln) amidotransferase subunit B, mitochondrial (541 aa).

This sequence belongs to the GatB/GatE family. GatB subfamily. In terms of assembly, subunit of the heterotrimeric GatFAB amidotransferase (AdT) complex, composed of A, B and F subunits.

Its subcellular location is the mitochondrion. It catalyses the reaction L-glutamyl-tRNA(Gln) + L-glutamine + ATP + H2O = L-glutaminyl-tRNA(Gln) + L-glutamate + ADP + phosphate + H(+). Its function is as follows. Allows the formation of correctly charged Gln-tRNA(Gln) through the transamidation of misacylated Glu-tRNA(Gln) in the mitochondria. The reaction takes place in the presence of glutamine and ATP through an activated gamma-phospho-Glu-tRNA(Gln). The chain is Glutamyl-tRNA(Gln) amidotransferase subunit B, mitochondrial from Saccharomyces cerevisiae (strain RM11-1a) (Baker's yeast).